Here is a 682-residue protein sequence, read N- to C-terminus: Protein PilJ (682 aa).

At 1 to 14 the chain is on the cytoplasmic side; that stretch reads MKKINAGNLFAGMR. The helical transmembrane segment at 15-38 threads the bilayer; it reads SSSVIAGLFIVLIVSIVLLFANFA. The Periplasmic portion of the chain corresponds to 39–306; sequence YLNTQSNHDK…DGFENLAGGR (268 aa). The chain crosses the membrane as a helical span at residues 307–333; that stretch reads SINLFAGYALGALALASIILIGLVMVR. Residues 334-682 lie on the Cytoplasmic side of the membrane; it reads ETNRRLAETA…FKLPEGVEQA (349 aa). The HAMP domain maps to 347-398; it reads DRNQAAILRLLDEIADLADGDLTVAATVTEDFTGAIADSINYSIDQLRELVE. The Methyl-accepting transducer domain occupies 403–639; it reads TAVQVAAAAQ…HISNTMNVIQ (237 aa).

Belongs to the methyl-accepting chemotaxis (MCP) protein family.

Its subcellular location is the cell inner membrane. May be a part of a signal-transduction system that regulates twitching motility by controlling pilus function (extension and retraction). The polypeptide is Protein PilJ (pilJ) (Pseudomonas aeruginosa (strain ATCC 15692 / DSM 22644 / CIP 104116 / JCM 14847 / LMG 12228 / 1C / PRS 101 / PAO1)).